The primary structure comprises 434 residues: Enolase (434 aa).

H158 and E167 together coordinate substrate. Residue E210 is the Proton donor of the active site. The Mg(2+) site is built by D245, E294, and D319. Substrate is bound by residues E294 and D319. The active-site Proton acceptor is K344. Substrate-binding positions include 371–374 (SHRS) and K395.

It belongs to the enolase family. As to quaternary structure, homodimer. Mg(2+) is required as a cofactor.

It localises to the cytoplasm. It catalyses the reaction (2R)-2-phosphoglycerate = phosphoenolpyruvate + H2O. It participates in carbohydrate degradation; glycolysis; pyruvate from D-glyceraldehyde 3-phosphate: step 4/5. The protein is Enolase of Doryteuthis pealeii (Longfin inshore squid).